Consider the following 436-residue polypeptide: Trigger factor (436 aa).

The PPIase FKBP-type domain maps to 161-246 (EDQLNIDFVG…VNTVSEPKLP (86 aa)).

This sequence belongs to the FKBP-type PPIase family. Tig subfamily.

It is found in the cytoplasm. The catalysed reaction is [protein]-peptidylproline (omega=180) = [protein]-peptidylproline (omega=0). Functionally, involved in protein export. Acts as a chaperone by maintaining the newly synthesized protein in an open conformation. Functions as a peptidyl-prolyl cis-trans isomerase. This Pseudomonas fluorescens (strain Pf0-1) protein is Trigger factor.